Consider the following 220-residue polypeptide: Small ribosomal subunit protein uS3c (220 aa).

Positions 43–120 (IQHYVEKNTR…RLNIAIIRVA (78 aa)) constitute a KH type-2 domain.

This sequence belongs to the universal ribosomal protein uS3 family. In terms of assembly, part of the 30S ribosomal subunit.

It localises to the plastid. It is found in the chloroplast. In Piper cenocladum (Ant piper), this protein is Small ribosomal subunit protein uS3c (rps3).